The following is a 94-amino-acid chain: Co-chaperonin GroES (94 aa).

It belongs to the GroES chaperonin family. Heptamer of 7 subunits arranged in a ring. Interacts with the chaperonin GroEL.

The protein resides in the cytoplasm. In terms of biological role, together with the chaperonin GroEL, plays an essential role in assisting protein folding. The GroEL-GroES system forms a nano-cage that allows encapsulation of the non-native substrate proteins and provides a physical environment optimized to promote and accelerate protein folding. GroES binds to the apical surface of the GroEL ring, thereby capping the opening of the GroEL channel. The chain is Co-chaperonin GroES from Clostridium kluyveri (strain NBRC 12016).